A 393-amino-acid chain; its full sequence is S-adenosylmethionine synthase 1 (393 aa).

Residue Glu-9 coordinates Mg(2+). His-15 is a binding site for ATP. Glu-43 contributes to the K(+) binding site. Residues Glu-56 and Gln-99 each contribute to the L-methionine site. Cys-114 carries the post-translational modification S-nitrosocysteine. Residues 167–169 (DGK), 235–238 (SGRF), Asp-246, 252–253 (RK), Ala-269, Lys-273, and Lys-277 each bind ATP. Asp-246 lines the L-methionine pocket. An L-methionine-binding site is contributed by Lys-277.

Belongs to the AdoMet synthase family. In terms of assembly, homotetramer. Interacts with GRF3. The cofactor is Mn(2+). It depends on Mg(2+) as a cofactor. Co(2+) is required as a cofactor. Requires K(+) as cofactor. In terms of processing, S-nitrosylated in the presence of NO. The inhibition of SAM1 activity by S-nitrosylation could contribute to the cross-talk between ethylene and NO signaling. As to expression, highly expressed in stems and roots.

The protein resides in the cytoplasm. It carries out the reaction L-methionine + ATP + H2O = S-adenosyl-L-methionine + phosphate + diphosphate. It participates in amino-acid biosynthesis; S-adenosyl-L-methionine biosynthesis; S-adenosyl-L-methionine from L-methionine: step 1/1. Its activity is regulated as follows. Reversibly inhibited by NO. Inhibited by 5,5'-dithiobis-2-nitrobenzoic acid (DTNB) and N-ethylmaleimide (NEM) (in vitro). Its function is as follows. Catalyzes the formation of S-adenosylmethionine from methionine and ATP. The reaction comprises two steps that are both catalyzed by the same enzyme: formation of S-adenosylmethionine (AdoMet) and triphosphate, and subsequent hydrolysis of the triphosphate. The sequence is that of S-adenosylmethionine synthase 1 (SAM1) from Arabidopsis thaliana (Mouse-ear cress).